Consider the following 486-residue polypeptide: MNTQQLAKLRSIVPEMHRVRHIHFVGIGGAGMGGIAEVLANEGYEISGSDLAPNAVTQQLTKLGAQIYFHHRAENVLNASVVVVSSAITADNPEIVAAHDARIPVIRRAEMLAELMRFRHGIAIAGTHGKTTTTAMVTSIYAEAGLDPTFVNGGLVKAAGTHARLGSSRYLIAEADESDASFLHLQPMVAIVTNIEADHMDTYQGDFENLKQTFINFLHNLPFYGQAVMCIDDAVIRELLPRVGRHITTYGFSDDADVRVAGYRQTGAQGHFTLERKDKTLLNVTLNAPGRHNALNAAAAVAVATDEGIDDEAILRALERFQGTSRRFDFLGEYPLELVNGQSGTAMLVDDYGHHPTEVDATIKAARAGWPDKRLVMIFQPHRYTRTRDLYDDFAHVLSQVDVLLMLDVYSAGESPIPGADSRSLCRTIRGRGKIDPILVTDMDTLPELLSQALRGEDLILVQGAGNIGKLARKLADSRLQPQISE.

G126–T132 provides a ligand contact to ATP.

It belongs to the MurCDEF family.

It is found in the cytoplasm. It catalyses the reaction UDP-N-acetyl-alpha-D-muramate + L-alanine + ATP = UDP-N-acetyl-alpha-D-muramoyl-L-alanine + ADP + phosphate + H(+). Its pathway is cell wall biogenesis; peptidoglycan biosynthesis. Cell wall formation. The polypeptide is UDP-N-acetylmuramate--L-alanine ligase (Pectobacterium atrosepticum (strain SCRI 1043 / ATCC BAA-672) (Erwinia carotovora subsp. atroseptica)).